The sequence spans 183 residues: Crossover junction endodeoxyribonuclease RuvC (183 aa).

Residues Asp7, Glu66, and Asp138 contribute to the active site. Mg(2+) is bound by residues Asp7, Glu66, and Asp138.

It belongs to the RuvC family. As to quaternary structure, homodimer which binds Holliday junction (HJ) DNA. The HJ becomes 2-fold symmetrical on binding to RuvC with unstacked arms; it has a different conformation from HJ DNA in complex with RuvA. In the full resolvosome a probable DNA-RuvA(4)-RuvB(12)-RuvC(2) complex forms which resolves the HJ. Mg(2+) is required as a cofactor.

It localises to the cytoplasm. It carries out the reaction Endonucleolytic cleavage at a junction such as a reciprocal single-stranded crossover between two homologous DNA duplexes (Holliday junction).. The RuvA-RuvB-RuvC complex processes Holliday junction (HJ) DNA during genetic recombination and DNA repair. Endonuclease that resolves HJ intermediates. Cleaves cruciform DNA by making single-stranded nicks across the HJ at symmetrical positions within the homologous arms, yielding a 5'-phosphate and a 3'-hydroxyl group; requires a central core of homology in the junction. The consensus cleavage sequence is 5'-(A/T)TT(C/G)-3'. Cleavage occurs on the 3'-side of the TT dinucleotide at the point of strand exchange. HJ branch migration catalyzed by RuvA-RuvB allows RuvC to scan DNA until it finds its consensus sequence, where it cleaves and resolves the cruciform DNA. The protein is Crossover junction endodeoxyribonuclease RuvC of Burkholderia ambifaria (strain ATCC BAA-244 / DSM 16087 / CCUG 44356 / LMG 19182 / AMMD) (Burkholderia cepacia (strain AMMD)).